Consider the following 389-residue polypeptide: Lipid-A-disaccharide synthase (389 aa).

This sequence belongs to the LpxB family.

It carries out the reaction a lipid X + a UDP-2-N,3-O-bis[(3R)-3-hydroxyacyl]-alpha-D-glucosamine = a lipid A disaccharide + UDP + H(+). It participates in bacterial outer membrane biogenesis; LPS lipid A biosynthesis. Condensation of UDP-2,3-diacylglucosamine and 2,3-diacylglucosamine-1-phosphate to form lipid A disaccharide, a precursor of lipid A, a phosphorylated glycolipid that anchors the lipopolysaccharide to the outer membrane of the cell. The polypeptide is Lipid-A-disaccharide synthase (Paraburkholderia xenovorans (strain LB400)).